Consider the following 234-residue polypeptide: MSVHIGAKEHEIADKILLPGDPLRAKYIAETFLEGATCYNQVRGMLGFTGTYKGHRISVQGTGMGVPSISIYVTELMQSYNVQTLIRVGTCGAIQKDVKVRDVILAMTSSTDSQMNRMTFGGIDYAPTANFDLLKTAYEIGKEKGLQLKVGSVFTADMFYNENAQFEKLARYGVLAVEMETTALYTLAAKFGRKALSVLTVSDHILTGEETTAEERQTTFNEMIEVALETAIRQ.

Residue His4 participates in a purine D-ribonucleoside binding. Phosphate is bound by residues Gly20, Arg24, Arg43, and 87–90 (RVGT). Residues Glu162, 178–180 (EME), and 202–203 (SD) contribute to the a purine D-ribonucleoside site. Catalysis depends on Asp203, which acts as the Proton donor.

Belongs to the PNP/UDP phosphorylase family. In terms of assembly, homohexamer; trimer of homodimers.

The catalysed reaction is a purine D-ribonucleoside + phosphate = a purine nucleobase + alpha-D-ribose 1-phosphate. It catalyses the reaction a purine 2'-deoxy-D-ribonucleoside + phosphate = a purine nucleobase + 2-deoxy-alpha-D-ribose 1-phosphate. In terms of biological role, catalyzes the reversible phosphorolytic breakdown of the N-glycosidic bond in the beta-(deoxy)ribonucleoside molecules, with the formation of the corresponding free purine bases and pentose-1-phosphate. The sequence is that of Purine nucleoside phosphorylase DeoD-type from Anoxybacillus flavithermus (strain DSM 21510 / WK1).